Consider the following 865-residue polypeptide: Outer membrane usher protein HtrE (865 aa).

The N-terminal stretch at 1-29 is a signal peptide; the sequence is MTIEYTKNYHHLTRIATFCALLYCNTAFS. C838 and C862 form a disulfide bridge.

Belongs to the fimbrial export usher family.

It is found in the cell outer membrane. Its function is as follows. Part of the yadCKLM-htrE-yadVN fimbrial operon. Could contribute to adhesion to various surfaces in specific environmental niches. Probably involved in the export and assembly of fimbrial subunits across the outer membrane. In Escherichia coli (strain K12), this protein is Outer membrane usher protein HtrE (htrE).